The primary structure comprises 472 residues: Cannabinoid receptor 1 (472 aa).

The Extracellular portion of the chain corresponds to 1 to 116 (MKSILDGLAD…CFMILNPSQQ (116 aa)). The interval 2–23 (KSILDGLADTTFRTITTDLLYV) is required for mitochondrial localization. 2 N-linked (GlcNAc...) asparagine glycosylation sites follow: Asn-77 and Asn-83. Residues 117-142 (LAIAVLSLTLGTFTVLENLLVLCVIL) traverse the membrane as a helical segment. The Cytoplasmic segment spans residues 143–154 (HSRSLRCRPSYH). The helical transmembrane segment at 155–175 (FIGSLAVADLLGSVIFVYSFV) threads the bilayer. The Extracellular portion of the chain corresponds to 176–187 (DFHVFHRKDSPN). The helical transmembrane segment at 188-212 (VFLFKLGGVTASFTASVGSLFLTAI) threads the bilayer. At 213–232 (DRYISIHRPLAYKKIVTRPK) the chain is on the cytoplasmic side. Residues 233–255 (AVVAFCLMWTIAIVIAVLPLLGW) form a helical membrane-spanning segment. Over 256–273 (NCKKLQSVCSDIFPLIDE) the chain is Extracellular. The chain crosses the membrane as a helical span at residues 274 to 299 (TYLMFWIGVTSVLLLFIVYAYMYILW). At 300 to 344 (KAHIHAVRMIQRGTQKSIIIHTSEDGKVQVTRPDQARMDIRLAKT) the chain is on the cytoplasmic side. Residues 345–365 (LVLILVVLIICWGPLLAIMVY) traverse the membrane as a helical segment. Residues 366–377 (DVFGKMNKLIKT) lie on the Extracellular side of the membrane. A helical transmembrane segment spans residues 378-399 (VFAFCSMLCLLNSTVNPIIYAL). The Cytoplasmic portion of the chain corresponds to 400 to 472 (RSKDLRHAFR…VSTNTSAKAL (73 aa)). A lipid anchor (S-palmitoyl cysteine) is attached at Cys-415. Ser-425 and Ser-429 each carry phosphoserine.

It belongs to the G-protein coupled receptor 1 family. Interacts (via C-terminus) with CNRIP1; this interaction attenuates constitutive, but not agonist-dependent, inhibition of voltage-gated Ca(2+) channels in neurons. Associates with G protein alpha subunits, including G(i) alpha-1/GNAI1, G(i) alpha-3/GNAI3 and G(o)-alpha/GNAO1; palmitoylation is important for interaction with GNAI3 and GNAO1. Palmitoylation at Cys-415 is important for recruitment at plasma membrane and lipid rafts and association with G protein alpha subunits. In terms of tissue distribution, expressed in cerebral arterial muscle cells and cerebral cortex (at protein level).

It is found in the cell membrane. It localises to the membrane raft. The protein resides in the mitochondrion outer membrane. The protein localises to the cell projection. Its subcellular location is the axon. It is found in the presynapse. With respect to regulation, hemopressin, a peptide derived from hemoglobin subunit alpha (HBA1 and/or HBA2), acts as an antagonist peptide: hemopressin-binding efficiently blocks cannabinoid receptor CNR1 and subsequent signaling. Its function is as follows. G-protein coupled receptor for endogenous cannabinoids (eCBs), including N-arachidonoylethanolamide (also called anandamide or AEA) and 2-arachidonoylglycerol (2-AG), as well as phytocannabinoids, such as delta(9)-tetrahydrocannabinol (THC). Mediates many cannabinoid-induced effects, acting, among others, on food intake, memory loss, gastrointestinal motility, catalepsy, ambulatory activity, anxiety, chronic pain. Signaling typically involves reduction in cyclic AMP. In the hypothalamus, may have a dual effect on mitochondrial respiration depending upon the agonist dose and possibly upon the cell type. Increases respiration at low doses, while decreases respiration at high doses. At high doses, CNR1 signal transduction involves G-protein alpha-i protein activation and subsequent inhibition of mitochondrial soluble adenylate cyclase, decrease in cyclic AMP concentration, inhibition of protein kinase A (PKA)-dependent phosphorylation of specific subunits of the mitochondrial electron transport system, including NDUFS2. In the hypothalamus, inhibits leptin-induced reactive oxygen species (ROS) formation and mediates cannabinoid-induced increase in SREBF1 and FASN gene expression. In response to cannabinoids, drives the release of orexigenic beta-endorphin, not that of melanocyte-stimulating hormone alpha/alpha-MSH, from hypothalamic POMC neurons, hence promoting food intake. In the hippocampus, regulates cellular respiration and energy production in response to cannabinoids. Involved in cannabinoid-dependent depolarization-induced suppression of inhibition (DSI), a process in which depolarization of CA1 postsynaptic pyramidal neurons mobilizes eCBs, which retrogradely activate presynaptic CB1 receptors, transiently decreasing GABAergic inhibitory neurotransmission. Also reduces excitatory synaptic transmission. In superior cervical ganglions and cerebral vascular smooth muscle cells, inhibits voltage-gated Ca(2+) channels in a constitutive, as well as agonist-dependent manner. In cerebral vascular smooth muscle cells, inhibition of voltage-gated Ca(2+) channels leads to vasodilation and decrease in vascular tone. Induces leptin production in adipocytes and reduces LRP2-mediated leptin clearance in the kidney, hence participating in hyperleptinemia. In adipose tissue, CNR1 signaling leads to increased expression of SREBF1, ACACA and FASN genes. In the liver, activation by endocannabinoids leads to increased de novo lipogenesis and reduced fatty acid catabolism, associated with increased expression of SREBF1/SREBP-1, GCK, ACACA, ACACB and FASN genes. May also affect de novo cholesterol synthesis and HDL-cholesteryl ether uptake. Peripherally modulates energy metabolism. In high carbohydrate diet-induced obesity, may decrease the expression of mitochondrial dihydrolipoyl dehydrogenase/DLD in striated muscles, as well as that of selected glucose/ pyruvate metabolic enzymes, hence affecting energy expenditure through mitochondrial metabolism. In response to cannabinoid anandamide, elicits a pro-inflammatory response in macrophages, which involves NLRP3 inflammasome activation and IL1B and IL18 secretion. In macrophages infiltrating pancreatic islets, this process may participate in the progression of type-2 diabetes and associated loss of pancreatic beta-cells. The polypeptide is Cannabinoid receptor 1 (CNR1) (Felis catus (Cat)).